Reading from the N-terminus, the 501-residue chain is MSALRRKFGDDYQVVTTSSSGSGLQPQGPGQGPQQQLVPKKKRQRFVDKNGRCNVQHGNLGSETSRYLSDLFTTLVDLKWRWNLFIFILTYTVAWLFMASMWWVIAYTRGDLNKAHVGNYTPCVANVYNFPSAFLFFIETEATIGYGYRYITDKCPEGIILFLFQSILGSIVDAFLIGCMFIKMSQPKKRAETLMFSEHAVISMRDGKLTLMFRVGNLRNSHMVSAQIRCKLLKSRQTPEGEFLPLDQLELDVGFSTGADQLFLVSPLTICHVIDAKSPFYDLSQRSMQTEQFEVVVILEGIVETTGMTCQARTSYTEDEVLWGHRFFPVISLEEGFFKVDYSQFHATFEVPTPPYSVKEQEEMLLMSSPLIAPAITNSKERHNSVECLDGLDDISTKLPSKLQKITGREDFPKKLLRMSSTTSEKAYSLGDLPMKLQRISSVPGNSEEKLVSKTTKMLSDPMSQSVADLPPKLQKMAGGPTRMEGNLPAKLRKMNSDRFT.

Positions 1-40 (MSALRRKFGDDYQVVTTSSSGSGLQPQGPGQGPQQQLVPK) are disordered. Over 1–80 (MSALRRKFGD…LFTTLVDLKW (80 aa)) the chain is Cytoplasmic. Low complexity predominate over residues 18 to 37 (SSSGSGLQPQGPGQGPQQQL). Residues 81–105 (RWNLFIFILTYTVAWLFMASMWWVI) traverse the membrane as a helical segment. Residues 106 to 129 (AYTRGDLNKAHVGNYTPCVANVYN) lie on the Extracellular side of the membrane. An N-linked (GlcNAc...) asparagine glycan is attached at Asn119. The helical; Pore-forming intramembrane region spans 130-141 (FPSAFLFFIETE). An intramembrane region (pore-forming) is located at residues 142–148 (ATIGYGY). Positions 143–148 (TIGYGY) match the Selectivity filter motif. Residues 149-157 (RYITDKCPE) are Extracellular-facing. A helical membrane pass occupies residues 158–179 (GIILFLFQSILGSIVDAFLIGC). Over 180–501 (MFIKMSQPKK…LRKMNSDRFT (322 aa)) the chain is Cytoplasmic. The segment at 182–209 (IKMSQPKKRAETLMFSEHAVISMRDGKL) is polyphosphoinositide (PIP2)-binding. Phosphoserine is present on residues Ser385 and Ser424. The segment covering 456-467 (TKMLSDPMSQSV) has biased composition (polar residues). A disordered region spans residues 456-501 (TKMLSDPMSQSVADLPPKLQKMAGGPTRMEGNLPAKLRKMNSDRFT).

The protein belongs to the inward rectifier-type potassium channel (TC 1.A.2.1) family. KCNJ3 subfamily. As to quaternary structure, associates with KCNJ5/GIRK4 or KCNJ6/GIRK2 to form a G-protein activated heteromultimer pore-forming unit. The resulting inward current is much larger. Associates with KCNJ9/GIRK3 to form a G-protein activated heteromultimer pore-forming unit.

It localises to the membrane. It carries out the reaction K(+)(in) = K(+)(out). With respect to regulation, heteromultimer composed of KCNJ3/GIRK1 and KCNJ5/GIRK4 is activated by phosphatidylinositol 4,5 biphosphate (PtdIns(4,5)P2). Inward rectifier potassium channels are characterized by a greater tendency to allow potassium to flow into the cell rather than out of it. Their voltage dependence is regulated by the concentration of extracellular potassium; as external potassium is raised, the voltage range of the channel opening shifts to more positive voltages. The inward rectification is mainly due to the blockage of outward current by internal magnesium. This potassium channel is controlled by G proteins. This receptor plays a crucial role in regulating the heartbeat. Forms a functional channel in association with KCNJ9/GIRK3. In Rattus norvegicus (Rat), this protein is G protein-activated inward rectifier potassium channel 1 (Kcnj3).